The primary structure comprises 211 residues: Protein-L-isoaspartate O-methyltransferase (211 aa).

Residue S62 is part of the active site.

Belongs to the methyltransferase superfamily. L-isoaspartyl/D-aspartyl protein methyltransferase family.

Its subcellular location is the cytoplasm. The enzyme catalyses [protein]-L-isoaspartate + S-adenosyl-L-methionine = [protein]-L-isoaspartate alpha-methyl ester + S-adenosyl-L-homocysteine. In terms of biological role, catalyzes the methyl esterification of L-isoaspartyl residues in peptides and proteins that result from spontaneous decomposition of normal L-aspartyl and L-asparaginyl residues. It plays a role in the repair and/or degradation of damaged proteins. The protein is Protein-L-isoaspartate O-methyltransferase of Shewanella sp. (strain MR-4).